We begin with the raw amino-acid sequence, 131 residues long: Lysosomal enzyme trafficking factor (131 aa).

The next 2 helical transmembrane spans lie at 8–28 (MGWI…YYVF) and 66–86 (LPFW…FLFL).

It belongs to the LYSET family.

The protein localises to the golgi apparatus membrane. Its function is as follows. Required for mannose-6-phosphate-dependent trafficking of lysosomal enzymes. LYSET bridges GlcNAc-1-phosphate transferase (GNPTAB), to the membrane-bound transcription factor site-1 protease (MBTPS1), thus allowing proteolytic activation of the GNPTAB. GNPTAB is involved in the regulation of M6P-dependent Golgi-to-lysosome trafficking of lysosomal enzymes. LYSET is thus an essential factor for maturation and delivery of lysosomal hydrolases. The polypeptide is Lysosomal enzyme trafficking factor (lyset-a) (Xenopus laevis (African clawed frog)).